Reading from the N-terminus, the 166-residue chain is Cyclic pyranopterin monophosphate synthase (166 aa).

Substrate-binding positions include 83-85 (LCH) and 121-122 (ME). Asp-136 is an active-site residue.

This sequence belongs to the MoaC family. As to quaternary structure, homohexamer; trimer of dimers.

The catalysed reaction is (8S)-3',8-cyclo-7,8-dihydroguanosine 5'-triphosphate = cyclic pyranopterin phosphate + diphosphate. It participates in cofactor biosynthesis; molybdopterin biosynthesis. Catalyzes the conversion of (8S)-3',8-cyclo-7,8-dihydroguanosine 5'-triphosphate to cyclic pyranopterin monophosphate (cPMP). In Trichodesmium erythraeum (strain IMS101), this protein is Cyclic pyranopterin monophosphate synthase.